A 338-amino-acid chain; its full sequence is UDP-3-O-acylglucosamine N-acyltransferase (338 aa).

Catalysis depends on histidine 239, which acts as the Proton acceptor.

This sequence belongs to the transferase hexapeptide repeat family. LpxD subfamily. Homotrimer.

The catalysed reaction is a UDP-3-O-[(3R)-3-hydroxyacyl]-alpha-D-glucosamine + a (3R)-hydroxyacyl-[ACP] = a UDP-2-N,3-O-bis[(3R)-3-hydroxyacyl]-alpha-D-glucosamine + holo-[ACP] + H(+). Its pathway is bacterial outer membrane biogenesis; LPS lipid A biosynthesis. Catalyzes the N-acylation of UDP-3-O-acylglucosamine using 3-hydroxyacyl-ACP as the acyl donor. Is involved in the biosynthesis of lipid A, a phosphorylated glycolipid that anchors the lipopolysaccharide to the outer membrane of the cell. This Thermosynechococcus vestitus (strain NIES-2133 / IAM M-273 / BP-1) protein is UDP-3-O-acylglucosamine N-acyltransferase.